The sequence spans 308 residues: V-type immunoglobulin domain-containing suppressor of T-cell activation (308 aa).

The first 32 residues, 1–32 (MGVPAVPEASSPRWGTLLLAIFLAASRGLVAA), serve as a signal peptide directing secretion. Positions 33–167 (FKVTTPYSLY…RFYGSMELQV (135 aa)) constitute an Ig-like V-type domain. The Extracellular segment spans residues 33–191 (FKVTTPYSLY…EQDSDSITAA (159 aa)). N-linked (GlcNAc...) asparagine glycosylation is found at Asn49, Asn91, and Asn127. The cysteines at positions 54 and 145 are disulfide-linked. A helical transmembrane segment spans residues 192 to 212 (ALATGACIVGILCLPLILLLV). The Cytoplasmic portion of the chain corresponds to 213 to 308 (YKQRQVASHR…VPDSPNSEAI (96 aa)). Positions 230–308 (MDSNTQGIEN…VPDSPNSEAI (79 aa)) are disordered. Ser232 is subject to Phosphoserine.

In terms of processing, at the cell surface, may be cleaved by MMP14. Post-translationally, N-glycosylated. Expressed in spleen, thymus, bone marrow, lymph node, and in T-cells within the lamina propria of the small intestine. Detected on CD4+ and CD8+ T-cells, bone marrow-derived dendritic cells (BMDCs), peritoneal macrophages, neutrophils, and natural killer (NK) cells. In spleen and lymph nodes, highly expressed on CD4+ T-cell populations, and at lower levels on CD8+ T-cells. In thymus, has low expression on CD4+ cells and CD8+ cells, and not detected on CD4+CD8+ cells. Expressed in splenic and peritoneal CD11b cells. Not detected in most B cells and NK cells (at protein level). Also detected at lower levels in non-hematopoeitic tissues such as heart, brain, lung, kidney, muscle, ovary, and testis.

Its subcellular location is the cell membrane. Immunoregulatory receptor which inhibits the T-cell response. May promote differentiation of embryonic stem cells, by inhibiting BMP4 signaling. May stimulate MMP14-mediated MMP2 activation. In Mus musculus (Mouse), this protein is V-type immunoglobulin domain-containing suppressor of T-cell activation.